Consider the following 330-residue polypeptide: Malate dehydrogenase (330 aa).

12–18 (GAAGQIG) lines the NAD(+) pocket. Positions 93 and 99 each coordinate substrate. NAD(+) contacts are provided by residues N106, Q113, and 130 to 132 (VGN). Substrate contacts are provided by N132 and R163. H188 functions as the Proton acceptor in the catalytic mechanism.

This sequence belongs to the LDH/MDH superfamily. MDH type 2 family.

It catalyses the reaction (S)-malate + NAD(+) = oxaloacetate + NADH + H(+). Catalyzes the reversible oxidation of malate to oxaloacetate. This is Malate dehydrogenase from Legionella pneumophila subsp. pneumophila (strain Philadelphia 1 / ATCC 33152 / DSM 7513).